Reading from the N-terminus, the 815-residue chain is Dual specificity tyrosine-phosphorylation-regulated kinase mbk-2 (815 aa).

Disordered stretches follow at residues 1–49, 67–146, 185–204, and 298–395; these read MAAL…NYTR, PSSF…PLGT, YEFP…SQQH, and ALPS…FRPE. Polar residues-rich tracts occupy residues 7-25 and 40-49; these read FTRN…TQQG and SKMSNINYTR. Residues 68–78 show a composition bias toward low complexity; that stretch reads SSFSGASSSSS. Polar residues-rich tracts occupy residues 119 to 140 and 190 to 204; these read SGNT…TSNL and GQAQ…SQQH. Residues 301 to 316 are compositionally biased toward low complexity; that stretch reads SVGTSSSNGSSNSSSG. The segment covering 325-351 has biased composition (polar residues); the sequence is LMTQSIGGPNKHLSASHSTLNTASTHD. Serine 361 is modified (phosphoserine; by cdk-1). Residues 363-391 are compositionally biased toward low complexity; sequence SNESLSRSHTSSSGGSQGGHNSNSGSNSG. Residues 460 to 773 form the Protein kinase domain; it reads YEVLKVIGKG…PAQALKHKWL (314 aa). ATP is bound by residues 466-474 and lysine 489; that span reads IGKGSFGQV. The active-site Proton acceptor is the aspartate 586. Tyrosine 620 is modified (phosphotyrosine; by autocatalysis).

It belongs to the protein kinase superfamily. CMGC Ser/Thr protein kinase family. MNB/DYRK subfamily. In terms of assembly, part of a complex, consisting of pseudophosphatases egg-3, egg-4, egg-5 and kinase mbk-2. Interacts (via Tyr-618 and Tyr-620) with egg-4 (via tyrosine-protein phosphatase domain) and egg-5 (via tyrosine-protein phosphatase domain); mbk-2 tyrosine phosphorylation enhances the interaction. The interaction inhibits mbk-2 kinase activity and is required for mbk-2 oocyte cortex localization. Interacts (via N-terminus) with egg-3 (via tyrosine-protein phosphatase domain); the interaction does not affect mbk-2 kinase activity, is enhanced by mbk-2 tyrosine phosphorylation status and requires prior binding of mbk-2 to egg-4 and egg-5. The cofactor is Mg(2+). Autophosphorylated.

Its subcellular location is the cytoplasm. It localises to the cell cortex. It catalyses the reaction L-seryl-[protein] + ATP = O-phospho-L-seryl-[protein] + ADP + H(+). The catalysed reaction is L-threonyl-[protein] + ATP = O-phospho-L-threonyl-[protein] + ADP + H(+). The enzyme catalyses L-tyrosyl-[protein] + ATP = O-phospho-L-tyrosyl-[protein] + ADP + H(+). With respect to regulation, activated during oocyte maturation by phosphorylation on Ser-361 by cdk-1. The pseudotyrosine phosphatases egg-4 and egg-5 sequester activated mbk-2 until the meiotic divisions and inhibit mbk-2 kinase activity directly, using a mixed-inhibition mechanism that does not involve tyrosine dephosphorylation. In terms of biological role, required for oocyte-to-zygote transition in which it phosphorylates oocyte proteins, including mei-1, oma-1, oma-2, mex-5, and mex-6, modifying their activity and/or stability following meiosis. Through phosphorylation of P granule components including meg-1, promotes the disassembly of zygotic P granules in the anterior cytoplasm during zygote polarization, and thus plays a role in P granule distribution and segregation in early stage embryos following meiosis. Functions in both spindle positioning and in the posterior localization of cytoplasmic determinants, including pie-1, pos-1, and pgl-1, in early embryos. Involved in the asymmetric distribution of plk-1 at the 2-cell embryonic stage. The chain is Dual specificity tyrosine-phosphorylation-regulated kinase mbk-2 from Caenorhabditis briggsae.